A 374-amino-acid chain; its full sequence is C-C chemokine receptor type 2 (374 aa).

Topologically, residues 1–42 are extracellular; the sequence is MLSTSRSRFIRNTNESGEEVTTFFDYDYGAPCHKFDVKQIGA. An N-linked (GlcNAc...) asparagine glycan is attached at N14. Y26 carries the sulfotyrosine modification. Residues 43–70 traverse the membrane as a helical segment; the sequence is QLLPPLYSLVFIFGFVGNMLVVLILINC. At 71 to 80 the chain is on the cytoplasmic side; sequence KKLKCLTDIY. A helical membrane pass occupies residues 81–100; the sequence is LLNLAISDLLFLITLPLWAH. The Extracellular portion of the chain corresponds to 101-114; that stretch reads SAANEWVFGNAMCK. The cysteines at positions 113 and 190 are disulfide-linked. Residues 115–136 traverse the membrane as a helical segment; the sequence is LFTGLYHIGYFGGIFFIILLTI. Topologically, residues 137-153 are cytoplasmic; it reads DRYLAIVHAVFALKART. Y139 is subject to Phosphotyrosine; by JAK2. A helical transmembrane segment spans residues 154–178; that stretch reads VTFGVVTSVITWLVAVFASVPGIIF. Over 179 to 206 the chain is Extracellular; that stretch reads TKCQKEDSVYVCGPYFPRGWNNFHTIMR. A helical transmembrane segment spans residues 207 to 226; that stretch reads NILGLVLPLLIMVICYSGIL. The Cytoplasmic portion of the chain corresponds to 227–243; that stretch reads KTLLRCRNEKKRHRAVR. A helical membrane pass occupies residues 244–268; sequence VIFTIMIVYFLFWTPYNIVILLNTF. Residues 269 to 285 lie on the Extracellular side of the membrane; that stretch reads QEFFGLSNCESTSQLDQ. Residues 286–309 traverse the membrane as a helical segment; it reads ATQVTETLGMTHCCINPIIYAFVG. Residues 310-374 are Cytoplasmic-facing; the sequence is EKFRSLFHIA…EASLQDKEGA (65 aa). Positions 348 to 374 are disordered; it reads QGLLDGRGKGKSIGRAPEASLQDKEGA.

Belongs to the G-protein coupled receptor 1 family. In terms of assembly, interacts with ARRB1. Interacts (via extracellular N-terminal region) with beta-defensin DEFB106A/DEFB106B; this interaction may preferentially require specific tyrosine sulfation on CCR2. Interacts with NUP85; the interaction is required for CCR2 clusters formation on the cell membrane and CCR2 signaling. As to quaternary structure, (Microbial infection) Binds to HIV-1 Tat. N-glycosylated. Post-translationally, sulfation increases the affinity for both monomeric and dimeric CCL2 with stronger binding to the monomeric form. Binding of sulfated CCR2 to CCL2 promotes conversion of CCL2 from dimer to monomer. As to expression, expressed by monocytes and IL2-activated NK cells. Abundantly expressed on CD14+/CD16- monocytes and weakly on CD14+/CD16+ monocytes, type 2 dendritic cells (DCs) and plasmacytoid DCs (at protein level).

The protein localises to the cell membrane. Key functional receptor for CCL2 but can also bind CCL7, and CCL12. Also transduces signaling mediated by CCL13. Its binding with CCL2 on monocytes and macrophages mediates chemotaxis and migration induction through the activation of the PI3K cascade, the small G protein Rac and lamellipodium protrusion. Also acts as a receptor for the beta-defensin DEFB106A/DEFB106B. Regulates the expression of T-cell inflammatory cytokines and T-cell differentiation, promoting the differentiation of T-cells into T-helper 17 cells (Th17) during inflammation. Facilitates the export of mature thymocytes by enhancing directional movement of thymocytes to sphingosine-1-phosphate stimulation and up-regulation of S1P1R expression; signals through the JAK-STAT pathway to regulate FOXO1 activity leading to an increased expression of S1P1R. Plays an important role in mediating peripheral nerve injury-induced neuropathic pain. Increases NMDA-mediated synaptic transmission in both dopamine D1 and D2 receptor-containing neurons, which may be caused by MAPK/ERK-dependent phosphorylation of GRIN2B/NMDAR2B. Mediates the recruitment of macrophages and monocytes to the injury site following brain injury. Its function is as follows. (Microbial infection) Alternative coreceptor with CD4 for HIV-1 infection. This Homo sapiens (Human) protein is C-C chemokine receptor type 2 (CCR2).